A 334-amino-acid chain; its full sequence is Malate dehydrogenase, cytoplasmic (334 aa).

11 to 17 (GAAGQIA) serves as a coordination point for NAD(+). Substrate-binding residues include arginine 92 and arginine 98. Residues asparagine 105, glutamine 112, and 129 to 131 (VGN) each bind NAD(+). Substrate contacts are provided by asparagine 131 and arginine 162. Histidine 187 serves as the catalytic Proton acceptor.

This sequence belongs to the LDH/MDH superfamily. MDH type 2 family. In terms of assembly, homodimer.

Its subcellular location is the cytoplasm. The protein resides in the cytosol. It catalyses the reaction (S)-malate + NAD(+) = oxaloacetate + NADH + H(+). It carries out the reaction (S)-2-hydroxyglutarate + NAD(+) = 2-oxoglutarate + NADH + H(+). Functionally, catalyzes the reduction of aromatic alpha-keto acids in the presence of NADH. Plays essential roles in the malate-aspartate shuttle and the tricarboxylic acid cycle, important in mitochondrial NADH supply for oxidative phosphorylation. Catalyzes the reduction of 2-oxoglutarate to 2-hydroxyglutarate, leading to elevated reactive oxygen species (ROS). The polypeptide is Malate dehydrogenase, cytoplasmic (mdh1) (Xenopus laevis (African clawed frog)).